The sequence spans 309 residues: Protease HtpX homolog (309 aa).

Helical transmembrane passes span 15–35 (NAVLTTYCVIFAFIGLLVDVI) and 54–74 (IFPTITVIMFLVAFVVIVVCI). A Zn(2+)-binding site is contributed by histidine 165. Glutamate 166 is a catalytic residue. Histidine 169 serves as a coordination point for Zn(2+). 2 consecutive transmembrane segments (helical) span residues 181-201 (VGILSNIMLLVANFSVYFFMG) and 213-233 (MILLVLQIVLPFLTLILQMYL). Glutamate 238 is a binding site for Zn(2+).

This sequence belongs to the peptidase M48B family. Requires Zn(2+) as cofactor.

The protein resides in the cell inner membrane. In Helicobacter acinonychis (strain Sheeba), this protein is Protease HtpX homolog.